The sequence spans 376 residues: Chlorophyll synthase, chloroplastic (376 aa).

Residues 1 to 47 (MATSHLLAAASSTAASSATFRPPLLSLRSPPPSSLRLNRRRHFQVVR) constitute a chloroplast transit peptide. The interval 48–69 (AAETDKETKANAPEKAPAGGSS) is disordered. 8 consecutive transmembrane segments (helical) span residues 95–115 (PVTW…SGNF), 171–191 (VITQ…LLDV), 197–217 (FPII…YSAP), 230–250 (FALG…LFGT), 255–275 (IVVL…VNDF), 300–320 (WICV…LFSS), 325–345 (YALA…QYFL), and 355–375 (YQAS…LATS).

The protein belongs to the UbiA prenyltransferase family. Chlorophyll synthase subfamily.

The protein localises to the plastid. It is found in the chloroplast membrane. It carries out the reaction phytyl diphosphate + chlorophyllide a + H(+) = chlorophyll a + diphosphate. Involved in one of the last steps of the biosynthesis of chlorophyll a. In Oryza sativa subsp. japonica (Rice), this protein is Chlorophyll synthase, chloroplastic (CHLG).